Here is a 371-residue protein sequence, read N- to C-terminus: tRNA-specific 2-thiouridylase MnmA (371 aa).

ATP is bound by residues 13–20 and M39; that span reads GMSGGVDS. Positions 99–101 are interaction with target base in tRNA; it reads NPD. C104 acts as the Nucleophile in catalysis. A disulfide bond links C104 and C200. G128 is a binding site for ATP. The interval 150-152 is interaction with tRNA; that stretch reads KDQ. The Cysteine persulfide intermediate role is filled by C200. Residues 308–309 are interaction with tRNA; that stretch reads RY.

This sequence belongs to the MnmA/TRMU family.

The protein resides in the cytoplasm. It catalyses the reaction S-sulfanyl-L-cysteinyl-[protein] + uridine(34) in tRNA + AH2 + ATP = 2-thiouridine(34) in tRNA + L-cysteinyl-[protein] + A + AMP + diphosphate + H(+). Catalyzes the 2-thiolation of uridine at the wobble position (U34) of tRNA, leading to the formation of s(2)U34. The polypeptide is tRNA-specific 2-thiouridylase MnmA (Listeria monocytogenes serotype 4b (strain CLIP80459)).